A 90-amino-acid polypeptide reads, in one-letter code: UPF0298 protein SSU98_1559 (90 aa).

It belongs to the UPF0298 family.

The protein resides in the cytoplasm. This chain is UPF0298 protein SSU98_1559, found in Streptococcus suis (strain 98HAH33).